Here is a 490-residue protein sequence, read N- to C-terminus: Phosphoglucosamine mutase (490 aa).

The active-site Phosphoserine intermediate is the serine 139. Residues serine 139, aspartate 279, aspartate 281, and aspartate 283 each coordinate Mg(2+). At serine 139 the chain carries Phosphoserine.

This sequence belongs to the phosphohexose mutase family. It depends on Mg(2+) as a cofactor. In terms of processing, activated by phosphorylation.

It catalyses the reaction alpha-D-glucosamine 1-phosphate = D-glucosamine 6-phosphate. Its function is as follows. Catalyzes the conversion of glucosamine-6-phosphate to glucosamine-1-phosphate. The sequence is that of Phosphoglucosamine mutase from Nostoc sp. (strain PCC 7120 / SAG 25.82 / UTEX 2576).